The sequence spans 81 residues: Photosystem I iron-sulfur center (81 aa).

4Fe-4S ferredoxin-type domains are found at residues Ser2–Trp31 and Ile39–Tyr68. 8 residues coordinate [4Fe-4S] cluster: Cys11, Cys14, Cys17, Cys21, Cys48, Cys51, Cys54, and Cys58.

The eukaryotic PSI reaction center is composed of at least 11 subunits. [4Fe-4S] cluster is required as a cofactor.

The protein resides in the plastid. The protein localises to the chloroplast thylakoid membrane. The enzyme catalyses reduced [plastocyanin] + hnu + oxidized [2Fe-2S]-[ferredoxin] = oxidized [plastocyanin] + reduced [2Fe-2S]-[ferredoxin]. In terms of biological role, apoprotein for the two 4Fe-4S centers FA and FB of photosystem I (PSI); essential for photochemical activity. FB is the terminal electron acceptor of PSI, donating electrons to ferredoxin. The C-terminus interacts with PsaA/B/D and helps assemble the protein into the PSI complex. Required for binding of PsaD and PsaE to PSI. PSI is a plastocyanin-ferredoxin oxidoreductase, converting photonic excitation into a charge separation, which transfers an electron from the donor P700 chlorophyll pair to the spectroscopically characterized acceptors A0, A1, FX, FA and FB in turn. The protein is Photosystem I iron-sulfur center of Phaseolus vulgaris (Kidney bean).